The following is a 408-amino-acid chain: 2,3-bisphosphoglycerate-independent phosphoglycerate mutase 1 (408 aa).

This sequence belongs to the BPG-independent phosphoglycerate mutase family. A-PGAM subfamily. In terms of assembly, monomer. Mn(2+) is required as a cofactor.

The enzyme catalyses (2R)-2-phosphoglycerate = (2R)-3-phosphoglycerate. It participates in carbohydrate degradation; glycolysis; pyruvate from D-glyceraldehyde 3-phosphate: step 3/5. In terms of biological role, catalyzes the interconversion of 2-phosphoglycerate and 3-phosphoglycerate. This is 2,3-bisphosphoglycerate-independent phosphoglycerate mutase 1 (apgM1) from Archaeoglobus fulgidus (strain ATCC 49558 / DSM 4304 / JCM 9628 / NBRC 100126 / VC-16).